The following is a 442-amino-acid chain: Cytochrome c biogenesis protein CcsB (442 aa).

3 helical membrane passes run 17–37 (LRLA…GTVI), 76–96 (TPWY…CTLT), and 162–182 (LGPI…ILGA).

Belongs to the Ccs1/CcsB family. May interact with CcsA.

It is found in the cellular thylakoid membrane. Functionally, required during biogenesis of c-type cytochromes (cytochrome c6 and cytochrome f) at the step of heme attachment. This chain is Cytochrome c biogenesis protein CcsB, found in Thermosynechococcus vestitus (strain NIES-2133 / IAM M-273 / BP-1).